A 182-amino-acid polypeptide reads, in one-letter code: Large ribosomal subunit protein uL6 (182 aa).

Belongs to the universal ribosomal protein uL6 family. As to quaternary structure, part of the 50S ribosomal subunit.

Its function is as follows. This protein binds to the 23S rRNA, and is important in its secondary structure. It is located near the subunit interface in the base of the L7/L12 stalk, and near the tRNA binding site of the peptidyltransferase center. The polypeptide is Large ribosomal subunit protein uL6 (Trichormus variabilis (strain ATCC 29413 / PCC 7937) (Anabaena variabilis)).